We begin with the raw amino-acid sequence, 920 residues long: Androgen receptor (920 aa).

The modulating stretch occupies residues 1–559; the sequence is MEVQLGLGRV…IDYYFPPQKT (559 aa). The interaction with ZNF318 stretch occupies residues 1–587; sequence MEVQLGLGRV…GSCKVFFKRA (587 aa). 2 disordered regions span residues 36–167 and 195–228; these read NPGP…LSLL and QQQQQEAVSEGSSSGRAREASGAPTSSKDNYLGG. Residues 44-91 are compositionally biased toward low complexity; sequence AASAAPPGASLLLLQQQQQQQQQQQQQQQQQQQQQQQETSPRQQQQQQ. Ser83 carries the post-translational modification Phosphoserine; by CDK9. Ser96 carries the phosphoserine modification. Residues 195–217 are compositionally biased toward low complexity; the sequence is QQQQQEAVSEGSSSGRAREASGA. A compositionally biased stretch (polar residues) spans 218–228; that stretch reads PTSSKDNYLGG. Tyr225 carries the post-translational modification Phosphotyrosine; by CSK. Ser258 bears the Phosphoserine mark. Tyr269 carries the phosphotyrosine; by CSK and TNK2 modification. A phosphotyrosine; by CSK mark is found at Tyr309, Tyr348, Tyr359, and Tyr364. Tyr365 is modified (phosphotyrosine; by CSK and TNK2). Lys388 is covalently cross-linked (Glycyl lysine isopeptide (Lys-Gly) (interchain with G-Cter in SUMO)). Tyr395 bears the Phosphotyrosine; by CSK mark. A Glycyl lysine isopeptide (Lys-Gly) (interchain with G-Cter in SUMO) cross-link involves residue Lys521. A phosphotyrosine; by CSK mark is found at Tyr535 and Tyr552. The tract at residues 552–919 is interaction with LPXN; that stretch reads YYFPPQKTCL…GKVKPIYFHT (368 aa). NR C4-type zinc fingers lie at residues 560 to 580 and 596 to 620; these read CLICGDEASGCHYGALTCGSC and CASRNDCTIDKFRRKNCPSCRLRKC. Positions 560-632 form a DNA-binding region, nuclear receptor; that stretch reads CLICGDEASG…AGMTLGARKL (73 aa). The interaction with HIPK3 stretch occupies residues 572–662; the sequence is YGALTCGSCK…TEETTQKLTV (91 aa). The tract at residues 592-919 is interaction with CCAR1; the sequence is QKYLCASRND…GKVKPIYFHT (328 aa). The tract at residues 625–919 is interaction with KAT7; it reads MTLGARKLKK…GKVKPIYFHT (295 aa). Phosphoserine; by STK4/MST1 is present on Ser651. The NR LBD domain occupies 669–900; it reads ECQPIFLNVL…DFPEMMAEII (232 aa). Residues Asn706 and Arg753 each contribute to the 17beta-hydroxy-5alpha-androstan-3-one site. Glycyl lysine isopeptide (Lys-Gly) (interchain with G-Cter in ubiquitin) cross-links involve residues Lys846 and Lys848. Residue Thr878 participates in 17beta-hydroxy-5alpha-androstan-3-one binding. Phosphotyrosine; by CSK is present on Tyr916.

This sequence belongs to the nuclear hormone receptor family. NR3 subfamily. In terms of assembly, binds DNA as a homodimer. Part of a ternary complex containing AR, EFCAB6/DJBP and PARK7. Interacts with HIPK3 and NR0B2 in the presence of androgen. The ligand binding domain interacts with KAT7/HBO1 in the presence of dihydrotestosterone. Interacts with EFCAB6/DJBP, PQBP1, RANBP9, RBAK, SPDEF, SRA1, TGFB1I1 and RREB1. Interacts with ZMIZ1/ZIMP10 and ZMIZ2/ZMIP7 which both enhance its transactivation activity. Interacts with SLC30A9 and RAD54L2/ARIP4. Interacts with MACROD1 (via macro domain). Interacts via the ligand-binding domain with LXXLL and FXXLF motifs from NCOA1, NCOA2, NCOA3 and MAGEA11. Interacts (via nuclear receptor DNA binding domain and nuclear receptor ligand binding domain) with NCOA4. The AR N-terminal poly-Gln region binds Ran resulting in enhancement of AR-mediated transactivation. Ran-binding decreases as the poly-Gln length increases. Interacts with HIP1 (via coiled coil domain). Interacts (via ligand-binding domain) with TRIM68. Interacts with TNK2. Interacts with USP26. Interacts with RNF6. Interacts (regulated by RNF6 probably through polyubiquitination) with RNF14; regulates AR transcriptional activity. Interacts with PRMT2 and TRIM24. Interacts with RACK1. Interacts with RANBP10; this interaction enhances dihydrotestosterone-induced AR transcriptional activity. Interacts with PRPF6 in a hormone-independent way; this interaction enhances dihydrotestosterone-induced AR transcriptional activity. Interacts with STK4/MST1. Interacts with ZIPK/DAPK3. Interacts with LPXN. Interacts with MAK. Part of a complex containing AR, MAK and NCOA3. Interacts with CRY1. Interacts with CCAR1 and GATA2. Interacts with ZNF318. Interacts with BUD31. Interacts with ARID4A. Interacts with ARID4B. Interacts (via NR LBD domain) with ZBTB7A; the interaction is direct and androgen-dependent. Interacts with NCOR1. Interacts with NCOR2. Interacts with CRY2 in a ligand-dependent manner. Sumoylated on Lys-388 (major) and Lys-521. Ubiquitinated. Deubiquitinated by USP26. 'Lys-6' and 'Lys-27'-linked polyubiquitination by RNF6 modulates AR transcriptional activity and specificity. In terms of processing, phosphorylated in prostate cancer cells in response to several growth factors including EGF. Phosphorylation is induced by c-Src kinase (CSK). Tyr-535 is one of the major phosphorylation sites and an increase in phosphorylation and Src kinase activity is associated with prostate cancer progression. Phosphorylation by TNK2 enhances the DNA-binding and transcriptional activity and may be responsible for androgen-independent progression of prostate cancer. Phosphorylation at Ser-83 by CDK9 regulates AR promoter selectivity and cell growth. Phosphorylation by PAK6 leads to AR-mediated transcription inhibition. Post-translationally, palmitoylated by ZDHHC7 and ZDHHC21. Palmitoylation is required for plasma membrane targeting and for rapid intracellular signaling via ERK and AKT kinases and cAMP generation. In terms of tissue distribution, mainly expressed in heart and skeletal muscle. Expressed in basal and stromal cells of the prostate (at protein level).

The protein resides in the nucleus. Its subcellular location is the cytoplasm. Its activity is regulated as follows. AIM-100 (4-amino-5,6-biaryl-furo[2,3-d]pyrimidine) suppresses TNK2-mediated phosphorylation at Tyr-269. Inhibits the binding of the Tyr-269 phosphorylated form to androgen-responsive enhancers (AREs) and its transcriptional activity. In terms of biological role, steroid hormone receptors are ligand-activated transcription factors that regulate eukaryotic gene expression and affect cellular proliferation and differentiation in target tissues. Transcription factor activity is modulated by bound coactivator and corepressor proteins like ZBTB7A that recruits NCOR1 and NCOR2 to the androgen response elements/ARE on target genes, negatively regulating androgen receptor signaling and androgen-induced cell proliferation. Transcription activation is also down-regulated by NR0B2. Activated, but not phosphorylated, by HIPK3 and ZIPK/DAPK3. Functionally, lacks the C-terminal ligand-binding domain and may therefore constitutively activate the transcription of a specific set of genes independently of steroid hormones. In Homo sapiens (Human), this protein is Androgen receptor (AR).